A 226-amino-acid chain; its full sequence is 2-C-methyl-D-erythritol 4-phosphate cytidylyltransferase (226 aa).

This sequence belongs to the IspD/TarI cytidylyltransferase family. IspD subfamily.

The catalysed reaction is 2-C-methyl-D-erythritol 4-phosphate + CTP + H(+) = 4-CDP-2-C-methyl-D-erythritol + diphosphate. The protein operates within isoprenoid biosynthesis; isopentenyl diphosphate biosynthesis via DXP pathway; isopentenyl diphosphate from 1-deoxy-D-xylulose 5-phosphate: step 2/6. Catalyzes the formation of 4-diphosphocytidyl-2-C-methyl-D-erythritol from CTP and 2-C-methyl-D-erythritol 4-phosphate (MEP). The sequence is that of 2-C-methyl-D-erythritol 4-phosphate cytidylyltransferase from Rhodococcus opacus (strain B4).